Here is a 201-residue protein sequence, read N- to C-terminus: Large ribosomal subunit protein uL4 (201 aa).

A disordered region spans residues 43-73 (TRAQKTRSEVSGGGAKPWRQKGTGRARAGTT).

The protein belongs to the universal ribosomal protein uL4 family. Part of the 50S ribosomal subunit.

Functionally, one of the primary rRNA binding proteins, this protein initially binds near the 5'-end of the 23S rRNA. It is important during the early stages of 50S assembly. It makes multiple contacts with different domains of the 23S rRNA in the assembled 50S subunit and ribosome. In terms of biological role, forms part of the polypeptide exit tunnel. This Colwellia psychrerythraea (strain 34H / ATCC BAA-681) (Vibrio psychroerythus) protein is Large ribosomal subunit protein uL4.